The sequence spans 53 residues: Antitoxin RelB3 (53 aa).

As to quaternary structure, forms heterodimers with RelE and possibly a heterotetramer RelE3-RelB3(2)-RelE3 from 2 heterodimers. The heterotetramer is probably not very stable in solution.

Functionally, antitoxin component of a type II toxin-antitoxin (TA) system. Probably neutralizes the toxic activity of cognate toxin RelE. This is Antitoxin RelB3 (relB3) from Methanocaldococcus jannaschii (strain ATCC 43067 / DSM 2661 / JAL-1 / JCM 10045 / NBRC 100440) (Methanococcus jannaschii).